We begin with the raw amino-acid sequence, 65 residues long: Large ribosomal subunit protein bL35 (65 aa).

The interval 1–46 (MPKMKTRQSAAKRYEVTGSGKLRRRRAGKNHLLQHKSAARKRSLST) is disordered. Residues 21 to 44 (KLRRRRAGKNHLLQHKSAARKRSL) are compositionally biased toward basic residues.

It belongs to the bacterial ribosomal protein bL35 family.

The sequence is that of Large ribosomal subunit protein bL35 from Gloeobacter violaceus (strain ATCC 29082 / PCC 7421).